The following is a 424-amino-acid chain: S-inosyl-L-homocysteine hydrolase (424 aa).

Substrate contacts are provided by aspartate 130 and glutamate 155. Threonine 156–threonine 158 lines the NAD(+) pocket. Positions 185 and 189 each coordinate substrate. NAD(+) is bound by residues asparagine 190, glycine 219–glycine 224, glutamate 242, asparagine 277, alanine 298–histidine 300, and asparagine 346.

The protein belongs to the adenosylhomocysteinase family. NAD(+) is required as a cofactor.

It is found in the cytoplasm. The enzyme catalyses S-inosyl-L-homocysteine + H2O = L-homocysteine + inosine. It functions in the pathway amino-acid biosynthesis; S-adenosyl-L-methionine biosynthesis. Functionally, catalyzes the hydrolysis of S-inosyl-L-homocysteine (SIH) to L-homocysteine (Hcy) and inosine. Likely functions in a S-adenosyl-L-methionine (SAM) recycling pathway from S-adenosyl-L-homocysteine (SAH) produced from SAM-dependent methylation reactions. Can also catalyze the reverse reaction in vitro, i.e. the synthesis of SIH from Hcy and inosine. This Methanopyrus kandleri (strain AV19 / DSM 6324 / JCM 9639 / NBRC 100938) protein is S-inosyl-L-homocysteine hydrolase.